A 307-amino-acid chain; its full sequence is UPF0282 protein PH1002 (307 aa).

This sequence belongs to the UPF0282 family.

This chain is UPF0282 protein PH1002, found in Pyrococcus horikoshii (strain ATCC 700860 / DSM 12428 / JCM 9974 / NBRC 100139 / OT-3).